A 482-amino-acid polypeptide reads, in one-letter code: tRNA sulfurtransferase (482 aa).

Residues 61-165 form the THUMP domain; sequence LAIRDALTRI…DDRLLLIKGR (105 aa). Residues 183-184, Lys-265, Gly-287, and Gln-296 contribute to the ATP site; that span reads LI. Cys-344 and Cys-456 are oxidised to a cystine. One can recognise a Rhodanese domain in the interval 404–482; it reads FGPNDVILDI…GFNNVKVYRL (79 aa). Residue Cys-456 is the Cysteine persulfide intermediate of the active site.

It belongs to the ThiI family.

Its subcellular location is the cytoplasm. The catalysed reaction is [ThiI sulfur-carrier protein]-S-sulfanyl-L-cysteine + a uridine in tRNA + 2 reduced [2Fe-2S]-[ferredoxin] + ATP + H(+) = [ThiI sulfur-carrier protein]-L-cysteine + a 4-thiouridine in tRNA + 2 oxidized [2Fe-2S]-[ferredoxin] + AMP + diphosphate. The enzyme catalyses [ThiS sulfur-carrier protein]-C-terminal Gly-Gly-AMP + S-sulfanyl-L-cysteinyl-[cysteine desulfurase] + AH2 = [ThiS sulfur-carrier protein]-C-terminal-Gly-aminoethanethioate + L-cysteinyl-[cysteine desulfurase] + A + AMP + 2 H(+). It functions in the pathway cofactor biosynthesis; thiamine diphosphate biosynthesis. Its function is as follows. Catalyzes the ATP-dependent transfer of a sulfur to tRNA to produce 4-thiouridine in position 8 of tRNAs, which functions as a near-UV photosensor. Also catalyzes the transfer of sulfur to the sulfur carrier protein ThiS, forming ThiS-thiocarboxylate. This is a step in the synthesis of thiazole, in the thiamine biosynthesis pathway. The sulfur is donated as persulfide by IscS. The polypeptide is tRNA sulfurtransferase (Shigella boydii serotype 18 (strain CDC 3083-94 / BS512)).